A 122-amino-acid polypeptide reads, in one-letter code: Large ribosomal subunit protein uL14 (122 aa).

Belongs to the universal ribosomal protein uL14 family. Part of the 50S ribosomal subunit. Forms a cluster with proteins L3 and L19. In the 70S ribosome, L14 and L19 interact and together make contacts with the 16S rRNA in bridges B5 and B8.

Its function is as follows. Binds to 23S rRNA. Forms part of two intersubunit bridges in the 70S ribosome. In Acidovorax sp. (strain JS42), this protein is Large ribosomal subunit protein uL14.